A 147-amino-acid polypeptide reads, in one-letter code: Hemoglobin subunit beta (147 aa).

Position 2 is an N-acetylvaline (V2). One can recognise a Globin domain in the interval 3–147 (HLTPEEKNAV…VANALAHKYH (145 aa)). A Phosphothreonine modification is found at T13. S45 carries the post-translational modification Phosphoserine. K60 bears the N6-acetyllysine mark. H64 lines the heme b pocket. N6-acetyllysine is present on K83. H93 is a binding site for heme b. C94 carries the post-translational modification S-nitrosocysteine. K145 carries the post-translational modification N6-acetyllysine.

This sequence belongs to the globin family. As to quaternary structure, heterotetramer of two alpha chains and two beta chains. Red blood cells.

Involved in oxygen transport from the lung to the various peripheral tissues. The sequence is that of Hemoglobin subunit beta (HBB) from Macaca fascicularis (Crab-eating macaque).